The following is a 76-amino-acid chain: Frizzled-3 (76 aa).

Residues 1–5 (YPERP) lie on the Cytoplasmic side of the membrane. Residues 6-26 (IIFYAVCYMMVSLIFFIGFLL) form a helical membrane-spanning segment. Topologically, residues 27 to 54 (EDRVACNASSPAQYKASTVTQGSHNKAC) are extracellular. N33 carries N-linked (GlcNAc...) asparagine glycosylation. Residues 55 to 75 (TMLFMVLYFFTMAGSVWWVIL) traverse the membrane as a helical segment. Residue R76 is a topological domain, cytoplasmic.

It belongs to the G-protein coupled receptor Fz/Smo family.

It localises to the membrane. It is found in the cell membrane. Its subcellular location is the cell surface. The protein resides in the apical cell membrane. Functionally, receptor for Wnt proteins. Most of frizzled receptors are coupled to the beta-catenin canonical signaling pathway, which leads to the activation of disheveled proteins, inhibition of GSK-3 kinase, nuclear accumulation of beta-catenin and activation of Wnt target genes. A second signaling pathway involving PKC and calcium fluxes has been seen for some family members, but it is not yet clear if it represents a distinct pathway or if it can be integrated in the canonical pathway, as PKC seems to be required for Wnt-mediated inactivation of GSK-3 kinase. Both pathways seem to involve interactions with G-proteins. May be involved in transduction and intercellular transmission of polarity information during tissue morphogenesis and/or in differentiated tissues. Plays a role in controlling early axon growth and guidance processes necessary for the formation of a subset of central and peripheral major fiber tracts. Involved in the migration of cranial neural crest cells. May also be implicated in the transmission of sensory information from the trunk and limbs to the brain. Controls commissural sensory axons guidance after midline crossing along the anterior-posterior axis in the developing spinal cord in a Wnt-dependent signaling pathway. Together with FZD6, is involved in the neural tube closure and plays a role in the regulation of the establishment of planar cell polarity (PCP). Promotes neurogenesis by maintaining sympathetic neuroblasts within the cell cycle in a beta-catenin-dependent manner. This is Frizzled-3 (FZD3) from Gallus gallus (Chicken).